The following is a 36-amino-acid chain: U4-ctenitoxin-Pr1a (36 aa).

3 cysteine pairs are disulfide-bonded: Cys3–Cys17, Cys10–Cys22, and Cys16–Cys34.

As to expression, expressed by the venom gland.

The protein localises to the secreted. In terms of biological role, neurotoxin. Causes spastic paralysis and death in mice. Moderate inhibitor of L-type calcium channels (Cav1/CACNA1). This Phoneutria reidyi (Brazilian Amazonian armed spider) protein is U4-ctenitoxin-Pr1a.